Consider the following 138-residue polypeptide: Large ribosomal subunit protein uL16 (138 aa).

Positions 1–13 are enriched in basic residues; it reads MLQPSRRKYRKEQ. The disordered stretch occupies residues 1-22; that stretch reads MLQPSRRKYRKEQKGRNTGLAT.

It belongs to the universal ribosomal protein uL16 family. As to quaternary structure, part of the 50S ribosomal subunit.

Binds 23S rRNA and is also seen to make contacts with the A and possibly P site tRNAs. In Bordetella petrii (strain ATCC BAA-461 / DSM 12804 / CCUG 43448), this protein is Large ribosomal subunit protein uL16.